Here is a 389-residue protein sequence, read N- to C-terminus: Chalcone synthase (389 aa).

Cys-164 is a catalytic residue.

This sequence belongs to the thiolase-like superfamily. Chalcone/stilbene synthases family.

The enzyme catalyses (E)-4-coumaroyl-CoA + 3 malonyl-CoA + 3 H(+) = 2',4,4',6'-tetrahydroxychalcone + 3 CO2 + 4 CoA. It functions in the pathway secondary metabolite biosynthesis; flavonoid biosynthesis. In terms of biological role, the primary product of this enzyme is 4,2',4',6'-tetrahydroxychalcone (also termed naringenin-chalcone or chalcone) which can under specific conditions spontaneously isomerize into naringenin. This is Chalcone synthase (CHS1) from Casuarina glauca (Swamp oak).